We begin with the raw amino-acid sequence, 577 residues long: Arginine--tRNA ligase (577 aa).

Residues 122-132 carry the 'HIGH' region motif; the sequence is PNVAKEMHVGH.

It belongs to the class-I aminoacyl-tRNA synthetase family. In terms of assembly, monomer.

Its subcellular location is the cytoplasm. It catalyses the reaction tRNA(Arg) + L-arginine + ATP = L-arginyl-tRNA(Arg) + AMP + diphosphate. The protein is Arginine--tRNA ligase of Salmonella enteritidis PT4 (strain P125109).